Consider the following 853-residue polypeptide: DNA mismatch repair protein MutS (853 aa).

ATP is bound at residue 614-621; the sequence is GPNMGGKS.

The protein belongs to the DNA mismatch repair MutS family.

Its function is as follows. This protein is involved in the repair of mismatches in DNA. It is possible that it carries out the mismatch recognition step. This protein has a weak ATPase activity. The sequence is that of DNA mismatch repair protein MutS from Escherichia coli O157:H7 (strain EC4115 / EHEC).